The sequence spans 854 residues: Translation initiation factor IF-2 (854 aa).

The span at 61–72 (KNIKTPTAKKPK) shows a compositional bias: basic residues. Disordered stretches follow at residues 61 to 115 (KNIK…LASA) and 167 to 186 (ESLK…KKES). A compositionally biased stretch (basic and acidic residues) spans 73-108 (KENAKDQEKLNESEKKEPKKEESKEQEKQEIIDTHK). Residues 353–520 (TRAPVITIMG…IVLLQADILE (168 aa)) form the tr-type G domain. The segment at 362–369 (GHVDHGKT) is G1. 362–369 (GHVDHGKT) provides a ligand contact to GTP. A G2 region spans residues 387 to 391 (GITQH). The tract at residues 408-411 (DTPG) is G3. Residues 408-412 (DTPGH) and 462-465 (NKMD) contribute to the GTP site. The G4 stretch occupies residues 462-465 (NKMD). Residues 498–500 (SAK) are G5.

Belongs to the TRAFAC class translation factor GTPase superfamily. Classic translation factor GTPase family. IF-2 subfamily.

It is found in the cytoplasm. Functionally, one of the essential components for the initiation of protein synthesis. Protects formylmethionyl-tRNA from spontaneous hydrolysis and promotes its binding to the 30S ribosomal subunits. Also involved in the hydrolysis of GTP during the formation of the 70S ribosomal complex. In Campylobacter jejuni subsp. doylei (strain ATCC BAA-1458 / RM4099 / 269.97), this protein is Translation initiation factor IF-2.